The sequence spans 444 residues: tRNA-2-methylthio-N(6)-dimethylallyladenosine synthase (444 aa).

The MTTase N-terminal domain occupies 7–121 (KTFHVKSFGC…LPELIARAER (115 aa)). [4Fe-4S] cluster-binding residues include Cys16, Cys52, Cys84, Cys158, Cys162, and Cys165. The region spanning 144 to 376 (GNQRPTAFLT…QALLNEQQQA (233 aa)) is the Radical SAM core domain. The 63-residue stretch at 379 to 441 (EATVGRTTRL…PNSLGAEPLM (63 aa)) folds into the TRAM domain.

The protein belongs to the methylthiotransferase family. MiaB subfamily. As to quaternary structure, monomer. The cofactor is [4Fe-4S] cluster.

Its subcellular location is the cytoplasm. The enzyme catalyses N(6)-dimethylallyladenosine(37) in tRNA + (sulfur carrier)-SH + AH2 + 2 S-adenosyl-L-methionine = 2-methylsulfanyl-N(6)-dimethylallyladenosine(37) in tRNA + (sulfur carrier)-H + 5'-deoxyadenosine + L-methionine + A + S-adenosyl-L-homocysteine + 2 H(+). In terms of biological role, catalyzes the methylthiolation of N6-(dimethylallyl)adenosine (i(6)A), leading to the formation of 2-methylthio-N6-(dimethylallyl)adenosine (ms(2)i(6)A) at position 37 in tRNAs that read codons beginning with uridine. The protein is tRNA-2-methylthio-N(6)-dimethylallyladenosine synthase of Sphingopyxis alaskensis (strain DSM 13593 / LMG 18877 / RB2256) (Sphingomonas alaskensis).